Reading from the N-terminus, the 490-residue chain is GTPase Der (490 aa).

EngA-type G domains follow at residues 3–166 (PVVA…MDDV) and 203–376 (IKLA…DSST). GTP is bound by residues 9–16 (GRPNVGKS), 56–60 (DTGGI), 118–121 (NKTD), 209–216 (GRPNVGKS), 256–260 (DTAGV), and 321–324 (NKWD). The region spanning 377–461 (RRVSTAMLTR…PIRIQFKEGE (85 aa)) is the KH-like domain.

The protein belongs to the TRAFAC class TrmE-Era-EngA-EngB-Septin-like GTPase superfamily. EngA (Der) GTPase family. Associates with the 50S ribosomal subunit.

In terms of biological role, GTPase that plays an essential role in the late steps of ribosome biogenesis. In Salmonella choleraesuis (strain SC-B67), this protein is GTPase Der.